Consider the following 93-residue polypeptide: uncharacterized protein (93 aa).

2 helical membrane-spanning segments follow: residues phenylalanine 8–serine 28 and alanine 54–leucine 74.

The protein localises to the cell membrane. This is an uncharacterized protein from Methanocaldococcus jannaschii (strain ATCC 43067 / DSM 2661 / JAL-1 / JCM 10045 / NBRC 100440) (Methanococcus jannaschii).